Here is a 209-residue protein sequence, read N- to C-terminus: Glycerol-3-phosphate acyltransferase (209 aa).

5 helical membrane passes run 7-27, 85-105, 117-137, 142-162, and 166-183; these read IELA…AIIV, AIIL…FFGF, VMFG…LFVA, ISSL…YLLA, and MAWV…FWRH.

This sequence belongs to the PlsY family. As to quaternary structure, probably interacts with PlsX.

It localises to the cell inner membrane. The enzyme catalyses an acyl phosphate + sn-glycerol 3-phosphate = a 1-acyl-sn-glycero-3-phosphate + phosphate. Its pathway is lipid metabolism; phospholipid metabolism. Its function is as follows. Catalyzes the transfer of an acyl group from acyl-phosphate (acyl-PO(4)) to glycerol-3-phosphate (G3P) to form lysophosphatidic acid (LPA). This enzyme utilizes acyl-phosphate as fatty acyl donor, but not acyl-CoA or acyl-ACP. The protein is Glycerol-3-phosphate acyltransferase of Hydrogenovibrio crunogenus (strain DSM 25203 / XCL-2) (Thiomicrospira crunogena).